The primary structure comprises 71 residues: Cell division protein ZapB (71 aa).

The stretch at 5–67 forms a coiled coil; it reads LEVLEQLESK…RALLGKMEQM (63 aa).

It belongs to the ZapB family. In terms of assembly, homodimer. The ends of the coiled-coil dimer bind to each other, forming polymers. Interacts with FtsZ.

It is found in the cytoplasm. Its function is as follows. Non-essential, abundant cell division factor that is required for proper Z-ring formation. It is recruited early to the divisome by direct interaction with FtsZ, stimulating Z-ring assembly and thereby promoting cell division earlier in the cell cycle. Its recruitment to the Z-ring requires functional FtsA or ZipA. The chain is Cell division protein ZapB from Aeromonas salmonicida (strain A449).